The sequence spans 270 residues: Ethanolamine ammonia-lyase small subunit (270 aa).

3 residues coordinate adenosylcob(III)alamin: Val-161, Glu-182, and Cys-211.

This sequence belongs to the EutC family. As to quaternary structure, the basic unit is a heterodimer which dimerizes to form tetramers. The heterotetramers trimerize; 6 large subunits form a core ring with 6 small subunits projecting outwards. The cofactor is adenosylcob(III)alamin.

It is found in the bacterial microcompartment. The enzyme catalyses ethanolamine = acetaldehyde + NH4(+). Its pathway is amine and polyamine degradation; ethanolamine degradation. In terms of biological role, catalyzes the deamination of various vicinal amino-alcohols to oxo compounds. Allows this organism to utilize ethanolamine as the sole source of nitrogen and carbon in the presence of external vitamin B12. The sequence is that of Ethanolamine ammonia-lyase small subunit from Azotobacter vinelandii (strain DJ / ATCC BAA-1303).